The primary structure comprises 324 residues: 4-diphosphocytidyl-2-C-methyl-D-erythritol kinase (324 aa).

Residue Lys11 is part of the active site. ATP is bound at residue 108 to 118; the sequence is PIGAGLAGGST. Residue Asp150 is part of the active site.

The protein belongs to the GHMP kinase family. IspE subfamily.

The catalysed reaction is 4-CDP-2-C-methyl-D-erythritol + ATP = 4-CDP-2-C-methyl-D-erythritol 2-phosphate + ADP + H(+). It functions in the pathway isoprenoid biosynthesis; isopentenyl diphosphate biosynthesis via DXP pathway; isopentenyl diphosphate from 1-deoxy-D-xylulose 5-phosphate: step 3/6. Its function is as follows. Catalyzes the phosphorylation of the position 2 hydroxy group of 4-diphosphocytidyl-2C-methyl-D-erythritol. This chain is 4-diphosphocytidyl-2-C-methyl-D-erythritol kinase, found in Cyanothece sp. (strain PCC 7425 / ATCC 29141).